A 1062-amino-acid polypeptide reads, in one-letter code: Carbamoyl phosphate synthase pyrimidine-specific large chain (1062 aa).

The segment at 1–401 (MGKREDIKKI…SLLKAVRSLE (401 aa)) is carboxyphosphate synthetic domain. Positions 129, 169, 175, 176, 208, 210, 215, 241, 242, 243, 284, and 298 each coordinate ATP. The 195-residue stretch at 133-327 (RALMKELNEP…IAKIAAKIAV (195 aa)) folds into the ATP-grasp 1 domain. Mg(2+) is bound by residues Q284, E298, and N300. The Mn(2+) site is built by Q284, E298, and N300. Residues 402-546 (AGVYHLDQPD…YGTYEEENES (145 aa)) are oligomerization domain. The interval 547-929 (ERTDKKSILV…ALYKGLIASG (383 aa)) is carbamoyl phosphate synthetic domain. Residues 671-861 (EQTLVELNIP…MANVATKVML (191 aa)) enclose the ATP-grasp 2 domain. ATP contacts are provided by R707, R746, L748, E752, G777, V778, H779, S780, Q820, and E832. Residues Q820, E832, and N834 each coordinate Mg(2+). Mn(2+)-binding residues include Q820, E832, and N834. The MGS-like domain maps to 930 to 1062 (MSIPTHGSVL…FSAESMPVMQ (133 aa)). An allosteric domain region spans residues 930–1062 (MSIPTHGSVL…FSAESMPVMQ (133 aa)).

Belongs to the CarB family. As to quaternary structure, composed of two chains; the small (or glutamine) chain promotes the hydrolysis of glutamine to ammonia, which is used by the large (or ammonia) chain to synthesize carbamoyl phosphate. Tetramer of heterodimers (alpha,beta)4. It depends on Mg(2+) as a cofactor. Mn(2+) serves as cofactor.

It carries out the reaction hydrogencarbonate + L-glutamine + 2 ATP + H2O = carbamoyl phosphate + L-glutamate + 2 ADP + phosphate + 2 H(+). It catalyses the reaction hydrogencarbonate + NH4(+) + 2 ATP = carbamoyl phosphate + 2 ADP + phosphate + 2 H(+). Its pathway is amino-acid biosynthesis; L-arginine biosynthesis; carbamoyl phosphate from bicarbonate: step 1/1. The protein operates within pyrimidine metabolism; UMP biosynthesis via de novo pathway; (S)-dihydroorotate from bicarbonate: step 1/3. Functionally, small subunit of the glutamine-dependent carbamoyl phosphate synthetase (CPSase). CPSase catalyzes the formation of carbamoyl phosphate from the ammonia moiety of glutamine, carbonate, and phosphate donated by ATP, constituting the first step of the biosynthetic pathway leading to pyrimidine nucleotides. The large subunit (synthetase) binds the substrates ammonia (free or transferred from glutamine from the small subunit), hydrogencarbonate and ATP and carries out an ATP-coupled ligase reaction, activating hydrogencarbonate by forming carboxy phosphate which reacts with ammonia to form carbamoyl phosphate. This Halalkalibacterium halodurans (strain ATCC BAA-125 / DSM 18197 / FERM 7344 / JCM 9153 / C-125) (Bacillus halodurans) protein is Carbamoyl phosphate synthase pyrimidine-specific large chain (pyrAB).